Consider the following 570-residue polypeptide: Proline--tRNA ligase (570 aa).

The protein belongs to the class-II aminoacyl-tRNA synthetase family. ProS type 1 subfamily. As to quaternary structure, homodimer.

The protein resides in the cytoplasm. It catalyses the reaction tRNA(Pro) + L-proline + ATP = L-prolyl-tRNA(Pro) + AMP + diphosphate. Catalyzes the attachment of proline to tRNA(Pro) in a two-step reaction: proline is first activated by ATP to form Pro-AMP and then transferred to the acceptor end of tRNA(Pro). As ProRS can inadvertently accommodate and process non-cognate amino acids such as alanine and cysteine, to avoid such errors it has two additional distinct editing activities against alanine. One activity is designated as 'pretransfer' editing and involves the tRNA(Pro)-independent hydrolysis of activated Ala-AMP. The other activity is designated 'posttransfer' editing and involves deacylation of mischarged Ala-tRNA(Pro). The misacylated Cys-tRNA(Pro) is not edited by ProRS. The polypeptide is Proline--tRNA ligase (Clostridium botulinum (strain Eklund 17B / Type B)).